Here is a 1317-residue protein sequence, read N- to C-terminus: DNA-directed RNA polymerase subunit beta' (1317 aa).

Cysteine 214, cysteine 286, cysteine 293, and cysteine 296 together coordinate Zn(2+). Residues 1279-1317 (RAYAGTQLSQDDEEFEETYDTDEDDFDMDDDDDFGDDED) are disordered. Over residues 1288–1317 (QDDEEFEETYDTDEDDFDMDDDDDFGDDED) the composition is skewed to acidic residues.

The protein belongs to the RNA polymerase beta' chain family. RpoC2 subfamily. In terms of assembly, in cyanobacteria the RNAP catalytic core is composed of 2 alpha, 1 beta, 1 beta', 1 gamma and 1 omega subunit. When a sigma factor is associated with the core the holoenzyme is formed, which can initiate transcription. Requires Zn(2+) as cofactor.

It catalyses the reaction RNA(n) + a ribonucleoside 5'-triphosphate = RNA(n+1) + diphosphate. DNA-dependent RNA polymerase catalyzes the transcription of DNA into RNA using the four ribonucleoside triphosphates as substrates. The protein is DNA-directed RNA polymerase subunit beta' of Synechocystis sp. (strain ATCC 27184 / PCC 6803 / Kazusa).